An 82-amino-acid polypeptide reads, in one-letter code: ATP synthase subunit c, chloroplastic (82 aa).

Helical transmembrane passes span 7-27 (AASV…PGIG) and 57-77 (LAFM…LLFA).

The protein belongs to the ATPase C chain family. As to quaternary structure, F-type ATPases have 2 components, F(1) - the catalytic core - and F(0) - the membrane proton channel. F(1) has five subunits: alpha(3), beta(3), gamma(1), delta(1), epsilon(1). F(0) has four main subunits: a(1), b(1), b'(1) and c(10-14). The alpha and beta chains form an alternating ring which encloses part of the gamma chain. F(1) is attached to F(0) by a central stalk formed by the gamma and epsilon chains, while a peripheral stalk is formed by the delta, b and b' chains.

The protein resides in the plastid. It is found in the chloroplast thylakoid membrane. In terms of biological role, f(1)F(0) ATP synthase produces ATP from ADP in the presence of a proton or sodium gradient. F-type ATPases consist of two structural domains, F(1) containing the extramembraneous catalytic core and F(0) containing the membrane proton channel, linked together by a central stalk and a peripheral stalk. During catalysis, ATP synthesis in the catalytic domain of F(1) is coupled via a rotary mechanism of the central stalk subunits to proton translocation. Its function is as follows. Key component of the F(0) channel; it plays a direct role in translocation across the membrane. A homomeric c-ring of between 10-14 subunits forms the central stalk rotor element with the F(1) delta and epsilon subunits. This is ATP synthase subunit c, chloroplastic from Porphyra purpurea (Red seaweed).